The chain runs to 142 residues: MKTFTAKPETVKRDWYVVDAAGQTLGRLATEIASRLRGKHKPEYTPHVDTGDYIVVINAEQVRVTGAKSSDKIYYSHSGFPGGIKSISFEKLIAKAPERVIETAVKGMLPKNPLGRDMYRKLKVYKGAVHPHTAQQPQELKI.

This sequence belongs to the universal ribosomal protein uL13 family. As to quaternary structure, part of the 50S ribosomal subunit.

Its function is as follows. This protein is one of the early assembly proteins of the 50S ribosomal subunit, although it is not seen to bind rRNA by itself. It is important during the early stages of 50S assembly. This chain is Large ribosomal subunit protein uL13, found in Azotobacter vinelandii (strain DJ / ATCC BAA-1303).